A 216-amino-acid polypeptide reads, in one-letter code: GTP cyclohydrolase 1 (216 aa).

Residues Cys-108, His-111, and Cys-179 each contribute to the Zn(2+) site.

Belongs to the GTP cyclohydrolase I family. Toroid-shaped homodecamer, composed of two pentamers of five dimers.

It carries out the reaction GTP + H2O = 7,8-dihydroneopterin 3'-triphosphate + formate + H(+). Its pathway is cofactor biosynthesis; 7,8-dihydroneopterin triphosphate biosynthesis; 7,8-dihydroneopterin triphosphate from GTP: step 1/1. This Shewanella oneidensis (strain ATCC 700550 / JCM 31522 / CIP 106686 / LMG 19005 / NCIMB 14063 / MR-1) protein is GTP cyclohydrolase 1.